We begin with the raw amino-acid sequence, 275 residues long: MATYFVGDLQGCYDELQLLLERVDFNPTQDKLYLVGDLVARGDKSLECLRFVKSLGNAAQTVLGNHDLHLIATALDIKKVKPRDRVDAIFNAPDFDELIHWLRHQPLLVHNEKLNFLMSHAGISPDWDLKTAKSCAAEVEQILQHGDFHYLIENMYSEQPDRWSPDLQGLARHRYIINAFTRMRFCYLDHRFDFACKSPLKDAPAELTPWFNLDNPLYKQIPIVFGHWASLVDEPTPKGIYALDTGCVWNNRMTMLRWEDKQFFTQSAVKNYSDF.

Belongs to the Ap4A hydrolase family.

It carries out the reaction P(1),P(4)-bis(5'-adenosyl) tetraphosphate + H2O = 2 ADP + 2 H(+). Its function is as follows. Hydrolyzes diadenosine 5',5'''-P1,P4-tetraphosphate to yield ADP. This chain is Bis(5'-nucleosyl)-tetraphosphatase, symmetrical (apaH), found in Haemophilus influenzae (strain ATCC 51907 / DSM 11121 / KW20 / Rd).